A 931-amino-acid polypeptide reads, in one-letter code: Beta-mannosidase A (931 aa).

A signal peptide spans 1-21 (MRHSIGLAAALLAPTLPVALG). N-linked (GlcNAc...) asparagine glycans are attached at residues Asn-40, Asn-79, Asn-247, Asn-282, and Asn-347. Glu-479 acts as the Proton donor in catalysis. 8 N-linked (GlcNAc...) asparagine glycosylation sites follow: Asn-550, Asn-608, Asn-658, Asn-738, Asn-790, Asn-798, Asn-830, and Asn-918.

Belongs to the glycosyl hydrolase 2 family. Beta-mannosidase A subfamily. Homodimer. Post-translationally, N-glycosylated.

It is found in the secreted. It catalyses the reaction Hydrolysis of terminal, non-reducing beta-D-mannose residues in beta-D-mannosides.. It participates in glycan metabolism; N-glycan degradation. Exoglycosidase that cleaves the single beta-linked mannose residue from the non-reducing end of beta-mannosidic oligosaccharides of various complexity and length. Involved in the degradation of polymeric mannan and galactomannan. Releases the terminal mannose residue from mannobiose and mannotriose, as well as from galactosyl-mannobiose (GM2), galactosyl-mannotriose (GM3) and di-galactosyl-mannopentaose (G2M5). This Aspergillus niger protein is Beta-mannosidase A (mndA).